Here is a 683-residue protein sequence, read N- to C-terminus: Leucine-rich repeat protein soc-2 homolog (683 aa).

Over residues 1–19 (MNLCSSGATASTTSLSSTG) the composition is skewed to low complexity. 2 disordered regions span residues 1–54 (MNLC…SDVS) and 74–150 (GTDE…IQAD). Over residues 26–49 (GVPGGGAEGGGGGGGSGNSGGGGK) the composition is skewed to gly residues. Over residues 74–86 (GTDELSNANSPAN) the composition is skewed to low complexity. The span at 99–117 (QQPTGSNGHSHLHNENNAN) shows a compositional bias: polar residues. LRR repeat units follow at residues 164-185 (GIKRLDLSKSSITVIPSTVKEC), 187-208 (HLTELYLYSNKIGQLPPEIGCL), 210-231 (SLRNLALNENSLTSLPESLQNC), 233-254 (QLKVLDLRHNKLAEIPSVIYRL), 256-277 (SLTTLYLRFNRITAVADDLRQL), 279-300 (NLTMLSLRENKIRELGSAIGAL), 302-323 (NLTTLDVSHNHLEHLPEDIGNC), 325-346 (NLSALDLQHNELLDIPDSIGNL), 348-370 (SLVRLGMRYNRLSSVPATLKNCK), 371-392 (SMDEFNVEGNGITQLPDGMLAS), 395-416 (GLTTITLSRNQFASYPTGGPAQ), 419-440 (NVYSINLEHNRIDKIPYGIFSR), 443-464 (GLTKLNMKENMLTALPLDIGTW), 466-487 (NMVELNLATNALQKLPDDIMNL), 489-510 (NLEILILSNNMLKKIPNTIGNL), 512-533 (RLRILDLEENRIEVLPHEIGLL), 535-556 (ELQRLILQTNQITMLPRSIGHL), 558-579 (NLTHLSVSENNLQFLPEEIGSL), 581-603 (SLENLYINQNPGLEKLPFELALC), and 605-626 (NLKYLNIDKCPLSTIPPEIQAG). Positions 661–671 (AGGNGGGGAAA) are enriched in gly residues. Residues 661–683 (AGGNGGGGAAAAGGSASRSSDRR) form a disordered region. Over residues 672-683 (AGGSASRSSDRR) the composition is skewed to low complexity.

This sequence belongs to the SHOC2 family.

Acts as a Ras effector and participates in MAPK pathway activation. Probably acts as a regulatory subunit of protein phosphatase that specifically dephosphorylates Raf kinase and stimulate Raf activity at specialized signaling complexes upon Ras activation. The polypeptide is Leucine-rich repeat protein soc-2 homolog (Sur-8) (Drosophila sechellia (Fruit fly)).